The sequence spans 450 residues: 3-keto-steroid reductase erg27 (450 aa).

The NADP(+) site is built by Leu25, Thr53, and Lys59. Active-site proton donor residues include Ser215 and Tyr238. NADP(+) is bound by residues Tyr238, Lys242, and Thr296. The Lowers pKa of active site Tyr role is filled by Lys242.

The protein belongs to the short-chain dehydrogenases/reductases (SDR) family. ERG27 subfamily. Heterotetramer of erg25, erg26, erg27 and erg28. Erg28 acts as a scaffold to tether erg27 and other 4,4-demethylation-related enzymes, forming a demethylation enzyme complex, in the endoplasmic reticulum.

It localises to the endoplasmic reticulum membrane. Its subcellular location is the lipid droplet. It participates in steroid metabolism; ergosterol biosynthesis. Its function is as follows. Sterol-C4-methyl oxidase; part of the third module of ergosterol biosynthesis pathway that includes the late steps of the pathway. Erg27 is a catalytic component of the C-4 demethylation complex that catalyzes the conversion of 4,4-dimethylfecosterol into fecosterol via 4-methylfecosterol. The third module or late pathway involves the ergosterol synthesis itself through consecutive reactions that mainly occur in the endoplasmic reticulum (ER) membrane. Firstly, the squalene synthase erg9 catalyzes the condensation of 2 farnesyl pyrophosphate moieties to form squalene, which is the precursor of all steroids. Squalene synthase is crucial for balancing the incorporation of farnesyl diphosphate (FPP) into sterol and nonsterol isoprene synthesis. Secondly, squalene is converted into lanosterol by the consecutive action of the squalene epoxidase erg1 and the lanosterol synthase erg7. Then, the delta(24)-sterol C-methyltransferase erg6 methylates lanosterol at C-24 to produce eburicol. Eburicol is the substrate of the sterol 14-alpha demethylase encoded by cyp51A and cyp51B, to yield 4,4,24-trimethyl ergosta-8,14,24(28)-trienol. The C-14 reductase erg24 then reduces the C14=C15 double bond which leads to 4,4-dimethylfecosterol. A sequence of further demethylations at C-4, involving the C-4 demethylation complex containing the C-4 methylsterol oxidases erg25A or erg25B, the sterol-4-alpha-carboxylate 3-dehydrogenase erg26 and the 3-keto-steroid reductase erg27, leads to the production of fecosterol via 4-methylfecosterol. The C-8 sterol isomerase erg2 then catalyzes the reaction which results in unsaturation at C-7 in the B ring of sterols and thus converts fecosterol to episterol. The sterol-C5-desaturase erg3B then catalyzes the introduction of a C-5 double bond in the B ring to produce 5-dehydroepisterol. The 2 other sterol-C5-desaturases, erg3A and erg3C, seem to be less important in ergosterol biosynthesis. The C-22 sterol desaturase erg5 further converts 5-dehydroepisterol into ergosta-5,7,22,24(28)-tetraen-3beta-ol by forming the C-22(23) double bond in the sterol side chain. Finally, ergosta-5,7,22,24(28)-tetraen-3beta-ol is substrate of the C-24(28) sterol reductases erg4A and erg4B to produce ergosterol. Possible alternative sterol biosynthetic pathways might exist from fecosterol to ergosterol, depending on the activities of the erg3 isoforms. The polypeptide is 3-keto-steroid reductase erg27 (Aspergillus fumigatus (strain ATCC MYA-4609 / CBS 101355 / FGSC A1100 / Af293) (Neosartorya fumigata)).